A 302-amino-acid polypeptide reads, in one-letter code: MAGRELSHLQQLEAESIQIIREVAAEFDNPVMLYSIGKDSSVMLHLARKAFYPGKIPFPLLHVDTGWKFKEMIAFRDAQAKKFGFELLTHINPEGLAQGINPFDHGSAKHTDIMKTQGLKQALNQYGFDAAFGGARRDEEKSRAKERVYSFRDRHHRWDPKNQRPELWRTYNGAVNKGESIRVFPLSNWTELDIWQYIYQENIELVPLYFAAKRQVVERGGQLIMADDERMKLAEGEQIKEEVVRFRTLGCYPLTAAMHSEADSLEKIIEEMLLTRSSERQGRLIDSDQSASMEQKKRQGYF.

The segment at 280 to 302 is disordered; sequence RQGRLIDSDQSASMEQKKRQGYF.

This sequence belongs to the PAPS reductase family. CysD subfamily. Heterodimer composed of CysD, the smaller subunit, and CysN.

The catalysed reaction is sulfate + ATP + H(+) = adenosine 5'-phosphosulfate + diphosphate. The protein operates within sulfur metabolism; hydrogen sulfide biosynthesis; sulfite from sulfate: step 1/3. Its function is as follows. With CysN forms the ATP sulfurylase (ATPS) that catalyzes the adenylation of sulfate producing adenosine 5'-phosphosulfate (APS) and diphosphate, the first enzymatic step in sulfur assimilation pathway. APS synthesis involves the formation of a high-energy phosphoric-sulfuric acid anhydride bond driven by GTP hydrolysis by CysN coupled to ATP hydrolysis by CysD. The sequence is that of Sulfate adenylyltransferase subunit 2 from Shewanella baltica (strain OS195).